The chain runs to 1025 residues: Multidrug resistance protein MdtC (1025 aa).

Transmembrane regions (helical) follow at residues 3–23 (FFAL…AITL), 333–353 (EVEQ…FLFL), 360–380 (IIPA…MYLC), 387–407 (LSLM…IVVL), 431–451 (VGFT…PLLL), 463–483 (FAVT…TLTP), 528–548 (LVGV…ISIP), 853–873 (VILI…LYES), 875–895 (VHPL…LLAL), 897–917 (LFNA…IGIV), 953–973 (PIMM…LSGG), and 984–1004 (ITIV…TPVV).

This sequence belongs to the resistance-nodulation-cell division (RND) (TC 2.A.6) family. MdtC subfamily. Part of a tripartite efflux system composed of MdtA, MdtB and MdtC. MdtC forms a heteromultimer with MdtB.

The protein resides in the cell inner membrane. Functionally, the MdtABC tripartite complex confers resistance against novobiocin and deoxycholate. This chain is Multidrug resistance protein MdtC, found in Escherichia coli O7:K1 (strain IAI39 / ExPEC).